A 438-amino-acid chain; its full sequence is Enolase (438 aa).

Gln174 is a binding site for (2R)-2-phosphoglycerate. Residue Glu216 is the Proton donor of the active site. Mg(2+) contacts are provided by Asp253, Glu297, and Asp324. Lys349, Arg378, Ser379, and Lys400 together coordinate (2R)-2-phosphoglycerate. Lys349 acts as the Proton acceptor in catalysis.

The protein belongs to the enolase family. In terms of assembly, component of the RNA degradosome, a multiprotein complex involved in RNA processing and mRNA degradation. The cofactor is Mg(2+).

The protein resides in the cytoplasm. It localises to the secreted. The protein localises to the cell surface. The enzyme catalyses (2R)-2-phosphoglycerate = phosphoenolpyruvate + H2O. It functions in the pathway carbohydrate degradation; glycolysis; pyruvate from D-glyceraldehyde 3-phosphate: step 4/5. Its function is as follows. Catalyzes the reversible conversion of 2-phosphoglycerate (2-PG) into phosphoenolpyruvate (PEP). It is essential for the degradation of carbohydrates via glycolysis. This is Enolase from Psychrobacter sp. (strain PRwf-1).